The chain runs to 658 residues: Threonine--tRNA ligase (658 aa).

Positions 1 to 64 (MSNTVSLQFP…GASGKVEIIT (64 aa)) constitute a TGS domain. The segment at 246–548 (DHRRLGREMD…LIENFAGHMP (303 aa)) is catalytic. Zn(2+)-binding residues include C343, H394, and H525.

This sequence belongs to the class-II aminoacyl-tRNA synthetase family. In terms of assembly, homodimer. Requires Zn(2+) as cofactor.

The protein resides in the cytoplasm. The enzyme catalyses tRNA(Thr) + L-threonine + ATP = L-threonyl-tRNA(Thr) + AMP + diphosphate + H(+). In terms of biological role, catalyzes the attachment of threonine to tRNA(Thr) in a two-step reaction: L-threonine is first activated by ATP to form Thr-AMP and then transferred to the acceptor end of tRNA(Thr). Also edits incorrectly charged L-seryl-tRNA(Thr). The protein is Threonine--tRNA ligase of Brucella melitensis biotype 1 (strain ATCC 23456 / CCUG 17765 / NCTC 10094 / 16M).